A 243-amino-acid chain; its full sequence is Voltage-gated monoatomic cation channel TMEM109 (243 aa).

The first 33 residues, 1-33, serve as a signal peptide directing secretion; the sequence is MAGAHSTPLWSRHLLKAVLMVLVALFLVHSASA. The Lumenal segment spans residues 34–83; the sequence is QSHREFASPGQQKKETSADILTQIGRSLKEMLDTWLGPETMHVISETLLQ. A helical transmembrane segment spans residues 84 to 104; sequence VMWAISSAISVACFALSGIAA. At 105–135 the chain is on the cytoplasmic side; it reads QLLSALGLDGEQLTQGLKLSPSQVQTLLLWG. Residues 136-156 form a helical membrane-spanning segment; the sequence is AAALVIYWLLSLLLGLVLALL. At 157 to 185 the chain is on the lumenal side; sequence GRILGGLKLVLFVAGFVALVRSVPDPSTR. Residues 186–205 traverse the membrane as a helical segment; it reads ALMLLALLTLFALLSRLTGS. Residues 206 to 243 lie on the Cytoplasmic side of the membrane; that stretch reads RSSGSHLEAKVRGLERQIEELRGRQRRAAKMPRSMEEE.

Homooligomer. Interacts with CRYAB; in the cellular response to DNA damage.

Its subcellular location is the nucleus outer membrane. It is found in the endoplasmic reticulum membrane. It localises to the sarcoplasmic reticulum membrane. The enzyme catalyses K(+)(in) = K(+)(out). It carries out the reaction Ca(2+)(in) = Ca(2+)(out). Its function is as follows. Functions as a voltage-gated monoatomic cation channel permeable to both potassium and calcium. Plays a role in the cellular response to DNA damage. The protein is Voltage-gated monoatomic cation channel TMEM109 of Mus musculus (Mouse).